Reading from the N-terminus, the 266-residue chain is Luciferase (266 aa).

Residues 22 to 41 (GLATACCAVAVASAIAFPYI) traverse the membrane as a helical segment.

Belongs to the fungal luciferase family.

Its subcellular location is the membrane. It carries out the reaction 3-hydroxyhispidin + O2 = (E)-caffeoylpyruvate + hnu + CO2. The catalysed reaction is 3-hydroxyhispidin + O2 = 4-[(E)-2-(3,4-dihydroxyphenyl)ethenyl]-1,7-dihydroxy-2,3,5-trioxabicyclo[2.2.2]oct-7-en-6-one. Its function is as follows. Luciferase; part of the gene cluster that mediates the fungal bioluminescence cycle. Uses the fungal luciferin 3-hydroxyhispidin as a substrate to produce an endoperoxide as a high-energy intermediate with decomposition that yields oxyluciferin (also known as caffeoylpyruvate) and light emission. The fungal bioluminescence cycle begins with the hispidin synthetase that catalyzes the formation of hispidin which is further hydroxylated by the hispidin-3-hydroxylase, yielding the fungal luciferin 3-hydroxyhispidin. The luciferase then produces an endoperoxide as a high-energy intermediate with decomposition that yields oxyluciferin and light emission. Oxyluciferin can be recycled to caffeic acid by caffeoylpyruvate hydrolase. The protein is Luciferase of Armillaria ostoyae (Armillaria root rot fungus).